The primary structure comprises 154 residues: Myoglobin (154 aa).

The region spanning Val-2–Lys-148 is the Globin domain. A Phosphoserine modification is found at Ser-4. Nitrite is bound at residue His-65. His-65 serves as a coordination point for O2. At Thr-68 the chain carries Phosphothreonine. His-94 serves as a coordination point for heme b.

The protein belongs to the globin family. As to quaternary structure, monomeric.

Its subcellular location is the cytoplasm. The protein resides in the sarcoplasm. The catalysed reaction is Fe(III)-heme b-[protein] + nitric oxide + H2O = Fe(II)-heme b-[protein] + nitrite + 2 H(+). It catalyses the reaction H2O2 + AH2 = A + 2 H2O. In terms of biological role, monomeric heme protein which primary function is to store oxygen and facilitate its diffusion within muscle tissues. Reversibly binds oxygen through a pentacoordinated heme iron and enables its timely and efficient release as needed during periods of heightened demand. Depending on the oxidative conditions of tissues and cells, and in addition to its ability to bind oxygen, it also has a nitrite reductase activity whereby it regulates the production of bioactive nitric oxide. Under stress conditions, like hypoxia and anoxia, it also protects cells against reactive oxygen species thanks to its pseudoperoxidase activity. This is Myoglobin (MB) from Megaptera novaeangliae (Humpback whale).